Here is a 340-residue protein sequence, read N- to C-terminus: NADPH dehydrogenase (340 aa).

23–26 (SPMC) serves as a coordination point for FMN. Tyrosine 28 contributes to the substrate binding site. Positions 60 and 102 each coordinate FMN. Residue 164-167 (HGAH) coordinates substrate. FMN-binding positions include arginine 215 and 307–308 (AR).

Belongs to the NADH:flavin oxidoreductase/NADH oxidase family. NamA subfamily. As to quaternary structure, homotetramer. FMN is required as a cofactor.

The catalysed reaction is A + NADPH + H(+) = AH2 + NADP(+). Its function is as follows. Catalyzes the reduction of the double bond of an array of alpha,beta-unsaturated aldehydes and ketones. It also reduces the nitro group of nitroester and nitroaromatic compounds. It could have a role in detoxification processes. The sequence is that of NADPH dehydrogenase from Geobacillus sp. (strain WCH70).